We begin with the raw amino-acid sequence, 294 residues long: Acetylglutamate kinase (294 aa).

Substrate-binding positions include 66–67, R88, and N193; that span reads GG.

The protein belongs to the acetylglutamate kinase family. ArgB subfamily.

Its subcellular location is the cytoplasm. It carries out the reaction N-acetyl-L-glutamate + ATP = N-acetyl-L-glutamyl 5-phosphate + ADP. The protein operates within amino-acid biosynthesis; L-arginine biosynthesis; N(2)-acetyl-L-ornithine from L-glutamate: step 2/4. In terms of biological role, catalyzes the ATP-dependent phosphorylation of N-acetyl-L-glutamate. The chain is Acetylglutamate kinase from Agrobacterium fabrum (strain C58 / ATCC 33970) (Agrobacterium tumefaciens (strain C58)).